The following is a 396-amino-acid chain: Subtilisin-like protease 5 (396 aa).

The signal sequence occupies residues 1–20 (MTGFFTFLSFSLAALSVTNA). A propeptide spanning residues 21–116 (AHILSVPKGA…VEPDAIISQH (96 aa)) is cleaved from the precursor. Residues 37-113 (YIVVMKDDTS…VAFVEPDAII (77 aa)) form the Inhibitor I9 domain. N-linked (GlcNAc...) asparagine glycosylation occurs at asparagine 63. Positions 125 to 396 (PWGLSRLSNR…SRLLYNGSGR (272 aa)) constitute a Peptidase S8 domain. Catalysis depends on charge relay system residues aspartate 156 and histidine 187. 2 N-linked (GlcNAc...) asparagine glycosylation sites follow: asparagine 230 and asparagine 248. Catalysis depends on serine 342, which acts as the Charge relay system. Over residues 376 to 389 (PTIRNPGPDTTSRL) the composition is skewed to polar residues. The interval 376–396 (PTIRNPGPDTTSRLLYNGSGR) is disordered. Residue asparagine 392 is glycosylated (N-linked (GlcNAc...) asparagine).

Belongs to the peptidase S8 family.

It localises to the secreted. In terms of biological role, secreted subtilisin-like serine protease with keratinolytic activity that contributes to pathogenicity. In Trichophyton tonsurans (Scalp ringworm fungus), this protein is Subtilisin-like protease 5 (SUB5).